The primary structure comprises 239 residues: Serine protease SplC (239 aa).

Positions 1–36 (MNKNIVIKSMAALAILTSVTGINAAVVDETQQIANA) are cleaved as a signal peptide. Residues histidine 75, aspartate 113, and serine 193 each act as charge relay system in the active site.

The protein belongs to the peptidase S1B family.

It localises to the secreted. In Staphylococcus aureus (strain bovine RF122 / ET3-1), this protein is Serine protease SplC (splC).